The primary structure comprises 281 residues: NADPH-dependent 7-cyano-7-deazaguanine reductase (281 aa).

Substrate is bound at residue 88–90 (IES). An NADPH-binding site is contributed by 90 to 91 (SK). Cysteine 189 functions as the Thioimide intermediate in the catalytic mechanism. Aspartate 196 acts as the Proton donor in catalysis. 228-229 (HE) provides a ligand contact to substrate. 257 to 258 (RG) serves as a coordination point for NADPH.

The protein belongs to the GTP cyclohydrolase I family. QueF type 2 subfamily. In terms of assembly, homodimer.

The protein localises to the cytoplasm. It catalyses the reaction 7-aminomethyl-7-carbaguanine + 2 NADP(+) = 7-cyano-7-deazaguanine + 2 NADPH + 3 H(+). Its pathway is tRNA modification; tRNA-queuosine biosynthesis. Catalyzes the NADPH-dependent reduction of 7-cyano-7-deazaguanine (preQ0) to 7-aminomethyl-7-deazaguanine (preQ1). In Erwinia tasmaniensis (strain DSM 17950 / CFBP 7177 / CIP 109463 / NCPPB 4357 / Et1/99), this protein is NADPH-dependent 7-cyano-7-deazaguanine reductase.